Reading from the N-terminus, the 200-residue chain is Small ribosomal subunit protein uS4 (200 aa).

The interval 22-42 is disordered; it reads TGKELEKRPYAPGPHGPNQRK. Residues 92 to 152 form the S4 RNA-binding domain; that stretch reads ARLDNLVYRM…EKSNSLVVVK (61 aa).

The protein belongs to the universal ribosomal protein uS4 family. In terms of assembly, part of the 30S ribosomal subunit. Contacts protein S5. The interaction surface between S4 and S5 is involved in control of translational fidelity.

In terms of biological role, one of the primary rRNA binding proteins, it binds directly to 16S rRNA where it nucleates assembly of the body of the 30S subunit. Its function is as follows. With S5 and S12 plays an important role in translational accuracy. This is Small ribosomal subunit protein uS4 from Bacillus mycoides (strain KBAB4) (Bacillus weihenstephanensis).